An 82-amino-acid chain; its full sequence is Small ribosomal subunit protein bS16 (82 aa).

Belongs to the bacterial ribosomal protein bS16 family.

The protein is Small ribosomal subunit protein bS16 of Methylobacillus flagellatus (strain ATCC 51484 / DSM 6875 / VKM B-1610 / KT).